The primary structure comprises 98 residues: Small ribosomal subunit protein bS20 (98 aa).

The interval 76–98 is disordered; that stretch reads HPNNGARKKSRLASKLKPIEQTA.

It belongs to the bacterial ribosomal protein bS20 family.

Functionally, binds directly to 16S ribosomal RNA. The sequence is that of Small ribosomal subunit protein bS20 from Trichormus variabilis (strain ATCC 29413 / PCC 7937) (Anabaena variabilis).